The following is a 243-amino-acid chain: UPF0246 protein Spy49_1742 (243 aa).

Belongs to the UPF0246 family.

This chain is UPF0246 protein Spy49_1742, found in Streptococcus pyogenes serotype M49 (strain NZ131).